A 275-amino-acid polypeptide reads, in one-letter code: MRDLHKKKPRPVTQNRLKKPPKTCKPINYRGILKKTAKVVGGAALISAVGCAGYGIYRIIAGTTFFKLERIEVSELKTLKRQEIIDLAGVREGDGMFGLRLRSIGEQIGKNPWVSRVEVRRYLPNTLSMQIAERQPVAVINMGYLYYLDANGDVFKPLTEGDQLDYPVITGISEEDIARDPAGSKGALKEVLELIAHLKSRADFKLDEVSEIHYDKGYGVTLFTAAAGVPVKLGSGDYSRKLDRLARIYKELQTQISVLEYIDLDYSDKIIVKKV.

Positions 1–20 (MRDLHKKKPRPVTQNRLKKP) are disordered. The Cytoplasmic segment spans residues 1-38 (MRDLHKKKPRPVTQNRLKKPPKTCKPINYRGILKKTAK). Residues 39-61 (VVGGAALISAVGCAGYGIYRIIA) form a helical membrane-spanning segment. The Periplasmic portion of the chain corresponds to 62 to 275 (GTTFFKLERI…YSDKIIVKKV (214 aa)). The 69-residue stretch at 66-134 (FKLERIEVSE…NTLSMQIAER (69 aa)) folds into the POTRA domain.

It belongs to the FtsQ/DivIB family. FtsQ subfamily.

The protein resides in the cell inner membrane. Essential cell division protein. The polypeptide is Cell division protein FtsQ (Geotalea daltonii (strain DSM 22248 / JCM 15807 / FRC-32) (Geobacter daltonii)).